The following is a 264-amino-acid chain: Mannose-specific lectin CEA (264 aa).

The N-terminal stretch at 1–23 (MAKLLLFLLPAILGLLVPRSAVA) is a signal peptide. Bulb-type lectin domains are found at residues 26–131 (TNYL…PWVP) and 145–252 (NNLL…PQAK). Residues 51–55 (QDDCN), Tyr59, Trp63, Gln64, 170–174 (QGDCN), Tyr178, and 182–185 (YGWQ) contribute to the beta-D-mannose site. The short motif at 51-59 (QDDCNLVLY) is the Carbohydrate-binding motif 1 element. Intrachain disulfides connect Cys54–Cys74 and Cys173–Cys195. The Carbohydrate-binding motif 2 motif lies at 170–178 (QGDCNLVLY).

Forms heterotetramer of 2 chains 1 and 2 chains 2 arranged as a dimer of chain 1 and chain 2 heterodimers.

It is found in the secreted. Its function is as follows. Mannose-specific lectin. Shows agglutinating activity towards erythrocytes from rabbit. Has insecticidal activity against cotton aphids and other hemipteran insects. This chain is Mannose-specific lectin CEA, found in Colocasia esculenta (Wild taro).